The sequence spans 662 residues: MQLDDDLEFAKKIFNPNRAFAKQARIKNMCEYKDLVHEANEDYEHFWGELAKQKLTWFKPFDKVLNSDNAPFFKWFENGKINVSYNCIDRHLKDKKNKVAIIFEGEMGDYNVITYRKLHSEVNKTANLLKNEFNVKKGDRVIIYMPMIVESVYMMLACARIGAIHSIVFAGFSPEALRDRINDAQAKLVITADGTFRKGKPYMLKPALDKALENNACPSVEKALIVIRNAKEIDYVRGRDFVYNEMVNYQSDKCEPEMMDSEDPLFLLYTSGSTGKPKGVQHSNAGYLLWAQMTMEWVFDIRDNDNFWCTADIGWITGHTYVVYGPLACGATTLILEGTMSYPDYGRWWRMIEEYRVDKFYTSPTAIRMLHAKGENEPLKYNLESLKVLGTVGEPINPTAWKWFYEKIGNSKCSIVDTWWQTETGGHIISPLPGATPIRASCATLPLPGIHAEVLNEDGTKTKPGEQGFLCITKPWPSMVRNIWGDEKRYIDSYFSQIKLNGEYVYLSGDGAIVDENGYITIIGRTDDIVNVSGHRIGTAEVESAISKHEMVVECAVVGIPDTIKGEGLFAFVVLCDGAKCNLGESLELLKEMNHILSVEIGKIAKLDNVMYVPGLPKTRSGKIMRRLLKSIAKKEPITQDLSTLEDVNVVKEIMSIVQMEE.

Residues 197–200 (RKGK) and threonine 317 contribute to the CoA site. Residues 393 to 395 (GEP), 417 to 422 (DTWWQT), aspartate 510, and arginine 525 contribute to the ATP site. Serine 533 is a binding site for CoA. Arginine 536 is a binding site for ATP. Mg(2+)-binding residues include histidine 549 and valine 552. Residue lysine 623 is modified to N6-acetyllysine.

The protein belongs to the ATP-dependent AMP-binding enzyme family. Mg(2+) serves as cofactor. In terms of processing, acetylated. Deacetylation by the SIR2-homolog deacetylase activates the enzyme.

It catalyses the reaction acetate + ATP + CoA = acetyl-CoA + AMP + diphosphate. Its function is as follows. Catalyzes the conversion of acetate into acetyl-CoA (AcCoA), an essential intermediate at the junction of anabolic and catabolic pathways. AcsA undergoes a two-step reaction. In the first half reaction, AcsA combines acetate with ATP to form acetyl-adenylate (AcAMP) intermediate. In the second half reaction, it can then transfer the acetyl group from AcAMP to the sulfhydryl group of CoA, forming the product AcCoA. This chain is Acetyl-coenzyme A synthetase, found in Helicobacter pylori (strain HPAG1).